The following is a 251-amino-acid chain: Glutamate 5-kinase (251 aa).

ATP is bound at residue Lys7. Substrate contacts are provided by Ser45, Asp130, and Asn142. ATP contacts are provided by residues 162-163 (SD) and 204-210 (TGGIVTK).

Belongs to the glutamate 5-kinase family.

The protein resides in the cytoplasm. It catalyses the reaction L-glutamate + ATP = L-glutamyl 5-phosphate + ADP. It functions in the pathway amino-acid biosynthesis; L-proline biosynthesis; L-glutamate 5-semialdehyde from L-glutamate: step 1/2. Functionally, catalyzes the transfer of a phosphate group to glutamate to form L-glutamate 5-phosphate. The chain is Glutamate 5-kinase from Campylobacter jejuni subsp. jejuni serotype O:6 (strain 81116 / NCTC 11828).